Consider the following 122-residue polypeptide: C-C motif chemokine 9 (122 aa).

Positions 1-21 (MKPFHTALSFLILTTALGIWA) are cleaved as a signal peptide. 3 disulfides stabilise this stretch: Cys-57-Cys-80, Cys-58-Cys-96, and Cys-67-Cys-107.

The protein belongs to the intercrine beta (chemokine CC) family. In terms of processing, the N-terminal is proteolytically cleaved by proteases associated with inflammatory responses. The processed forms CCL9(29-101), CCL9(30-101) and CCL9(31-101) exhibit increase in CCR1-mediated signaling and chemotaxis assays in vitro. In terms of tissue distribution, expressed mainly in the liver, lung, and the thymus, although some expression has been detected in a wide variety of tissues except brain.

Its subcellular location is the secreted. In terms of biological role, monokine with inflammatory, pyrogenic and chemokinetic properties. Circulates at high concentrations in the blood of healthy animals. Binding to a high-affinity receptor activates calcium release in neutrophils. It also inhibits colony formation of bone marrow myeloid immature progenitors. This Mus musculus (Mouse) protein is C-C motif chemokine 9 (Ccl9).